Consider the following 1002-residue polypeptide: Carboxypeptidase Y (1002 aa).

A signal peptide spans 1–18 (MLMKQTFLYFLLTCVVSA). Positions 19-521 (QFNGYVPPEQ…AYLEMLKAEG (503 aa)) are excised as a propeptide. Disordered stretches follow at residues 51 to 91 (QEES…TALE), 124 to 436 (DEDE…NMQS), and 527 to 546 (AFRD…ADSS). 2 stretches are compositionally biased toward basic and acidic residues: residues 63–81 (PERD…HEFN) and 127–143 (EHVR…EDAP). The segment covering 144–170 (RRKHGKCKGKGKHHKGKHAKGKGKKSH) has biased composition (basic residues). Residues 171–205 (PKPEDDSVFFDDERPKHHEFDDEDREFPAHHEPGE) show a composition bias toward basic and acidic residues. Repeat copies occupy residues 225-237 (MHHE…PPPP), 238-250 (MHHE…PPPP), 251-263 (MHHE…PPPP), 264-276 (MHHE…PPPP), 277-289 (MHHE…PPPP), 290-302 (MHHE…PPPP), 303-315 (MHHE…PPPP), 316-328 (MHHE…PPPP), 329-341 (MHHE…PPPP), 361-369 (DKEHHKGPK), 370-378 (DKEHHKGPK), 379-387 (DKEHHKGPK), 388-396 (DKEHHKGPK), 397-405 (DKEHHKGPK), and 406-414 (DKEHHKGPK). A 9 X 13 AA tandem repeats of M-H-H-E-P-G-E-H-M-P-P-P-P region spans residues 225-341 (MHHEPGEHMP…EPGEHMPPPP (117 aa)). Basic and acidic residues predominate over residues 343-431 (KHHELEEHEG…PKEKHNERPE (89 aa)). Positions 361 to 423 (DKEHHKGPKD…KDKEHHQGPK (63 aa)) are 7 X 9 AA tandem repeats of D-K-E-H-H-K-G-P-K. A 2-7; approximate repeat occupies 415–423 (DKEHHQGPK). Cystine bridges form between Cys627–Cys880, Cys776–Cys789, Cys799–Cys822, Cys806–Cys815, and Cys844–Cys851. A glycan (N-linked (GlcNAc...) asparagine) is linked at Asn659. The active site involves Ser715. Asp921 is a catalytic residue. Cys924 contributes to the substrate binding site. His978 is an active-site residue. Residue Met979 coordinates substrate.

Belongs to the peptidase S10 family. Heterodimer of two subunits of 32 kDa and 19 kDa derived from the precursor protein and linked by a disulfide bond.

It localises to the vacuole. The catalysed reaction is Release of a C-terminal amino acid with broad specificity.. In terms of biological role, involved in degradation of small peptides. Digests preferentially peptides containing an aliphatic or hydrophobic residue in P1' position, as well as methionine, leucine or phenylalanine in P1 position of ester substrate. In Schizosaccharomyces pombe (strain 972 / ATCC 24843) (Fission yeast), this protein is Carboxypeptidase Y (cpy1).